The following is a 1726-amino-acid chain: Protein Shroom2 (1726 aa).

Positions Ala-79–Asn-159 constitute a PDZ domain. Disordered stretches follow at residues Asp-294 to Ser-373, Arg-425 to Tyr-451, Phe-657 to Trp-676, and Glu-697 to Arg-785. Over residues Val-318 to Ser-328 the composition is skewed to polar residues. Residues Lys-329–Glu-338 are compositionally biased toward basic and acidic residues. Residues Phe-657 to Ser-667 are compositionally biased toward basic and acidic residues. Composition is skewed to polar residues over residues Ser-746–Ser-755 and Leu-769–Arg-785. The ASD1 domain maps to Leu-788–Gly-877. Disordered regions lie at residues Pro-913–Thr-968, Leu-1007–Ala-1080, Lys-1092–Pro-1120, Phe-1166–Ser-1240, Ser-1269–Pro-1299, and Ala-1471–Ala-1499. Low complexity predominate over residues Pro-917 to Glu-926. Basic and acidic residues predominate over residues Asp-936–Arg-948. 2 stretches are compositionally biased toward polar residues: residues Asn-1054–Arg-1070 and Glu-1104–Leu-1119. Over residues Ser-1191–Ala-1205 the composition is skewed to low complexity. A compositionally biased stretch (polar residues) spans Arg-1209–Pro-1235. The 295-residue stretch at Glu-1427–Pro-1721 folds into the ASD2 domain.

This sequence belongs to the shroom family. Interacts with F-actin.

It localises to the apical cell membrane. The protein resides in the cell junction. Its subcellular location is the tight junction. The protein localises to the cytoplasm. It is found in the cytoskeleton. Functionally, may be involved in endothelial cell morphology changes during cell spreading. Required for eye pigmentation. In the retinal pigment epithelium, regulates the biogenesis of melanosomes and promotes their association with the apical cell surface by inducing gamma-tubulin redistribution. This Xenopus tropicalis (Western clawed frog) protein is Protein Shroom2 (shroom2).